A 1966-amino-acid chain; its full sequence is Dedicator of cytokinesis protein 4 (1966 aa).

The SH3 domain maps to Glu-6–Ala-67. Tyr-167 bears the Phosphotyrosine mark. The residue at position 193 (Thr-193) is a Phosphothreonine. A C2 DOCK-type domain is found at Arg-401–Cys-574. Residues Lys-1190–Met-1596 enclose the DOCKER domain. Phosphoserine occurs at positions 1599, 1607, 1614, 1618, 1620, and 1631. 2 disordered regions span residues Ser-1648–Thr-1729 and Ile-1742–Leu-1966. Residues Pro-1672–Leu-1703 are compositionally biased toward low complexity. Ser-1769 carries the phosphoserine modification. An SH3-binding motif is present at residues Pro-1788 to Pro-1794. Polar residues predominate over residues Thr-1795–Pro-1809. Residues Ser-1838–Ser-1863 are compositionally biased toward low complexity. The segment covering Gly-1864–Ser-1873 has biased composition (polar residues). A compositionally biased stretch (basic and acidic residues) spans Ser-1941 to Pro-1954.

The protein belongs to the DOCK family. As to quaternary structure, interacts with nucleotide-free Rap1; functions as a guanine nucleotide exchange factor (GEF) for Rap1. Interacts (via DOCKER domain) with RAC1; functions as a guanine nucleotide exchange factor (GEF) for RAC1. Interacts with the SH3 domain of CRK. Interacts with FASLG. Interacts with ELMO2 and EPHA2; mediates activation of RAC1 by EPHA2. Interacts with USH1C (via PDZ 1 domain). In terms of tissue distribution, widely expressed at low level. Highly expressed in skeletal muscle, prostate and ovary. May be specifically expressed in the brain and eye.

It localises to the cell membrane. Its subcellular location is the cell projection. The protein localises to the cytoplasm. The protein resides in the cytosol. In terms of biological role, functions as a guanine nucleotide exchange factor (GEF) that promotes the exchange of GDP to GTP, converting inactive GDP-bound small GTPases into their active GTP-bound form. Involved in regulation of adherens junction between cells. Plays a role in cell migration. Its function is as follows. Has a higher guanine nucleotide exchange factor activity compared to other isoforms. This Homo sapiens (Human) protein is Dedicator of cytokinesis protein 4 (DOCK4).